The following is a 90-amino-acid chain: Large ribosomal subunit protein eL37 (90 aa).

Residues 13-46 (NKSHTLCNRCGRRSFHVQKKTCSSCGYPAAKMRS) form an A20-type zinc finger. Residues cysteine 19, cysteine 22, cysteine 34, and cysteine 37 each coordinate Zn(2+).

It belongs to the eukaryotic ribosomal protein eL37 family. Component of the large ribosomal subunit. Mature ribosomes consist of a small (40S) and a large (60S) subunit. The 40S subunit contains about 32 different proteins and 1 molecule of RNA (18S). The 60S subunit contains 45 different proteins and 3 molecules of RNA (25S, 5.8S and 5S). Requires Zn(2+) as cofactor.

The protein localises to the cytoplasm. Component of the ribosome, a large ribonucleoprotein complex responsible for the synthesis of proteins in the cell. The small ribosomal subunit (SSU) binds messenger RNAs (mRNAs) and translates the encoded message by selecting cognate aminoacyl-transfer RNA (tRNA) molecules. The large subunit (LSU) contains the ribosomal catalytic site termed the peptidyl transferase center (PTC), which catalyzes the formation of peptide bonds, thereby polymerizing the amino acids delivered by tRNAs into a polypeptide chain. The nascent polypeptides leave the ribosome through a tunnel in the LSU and interact with protein factors that function in enzymatic processing, targeting, and the membrane insertion of nascent chains at the exit of the ribosomal tunnel. This chain is Large ribosomal subunit protein eL37, found in Candida albicans (strain SC5314 / ATCC MYA-2876) (Yeast).